The following is a 349-amino-acid chain: MVRAKRKLDHIEYALSTGQSRTHGFHDIDFVHQSLPNSSYDTITCETKIGELSLSSPIFINAMTGGGGEQTLHINEQLAYVAKHHNLAMAVGSQMAALKDESESASYKVVRKVNPNGIFFANLGSEATVEQAERAVDMIEANALQIHLNVIQELTMPEGDRDFTGVLQRIEKIVLKSKVPVIVKEVGFGMSKETVQQLANIGITAIDIGGQGGTNFAAVENERRQRMLSYFNNWGIQTATSIIEATSTNNNLSFIASGGIQTALDVAKAIALGANTTAFAGYFLRILMQDGVENLVDEIDLLHTDLKFIMTALGVKTIEELQSVPLVVKGETYHWLAQRGIDTAHYSRR.

Residue 6–7 coordinates substrate; sequence RK. FMN is bound by residues 62–64, serine 93, and asparagine 122; that span reads AMT. A substrate-binding site is contributed by glutamine 152. Glutamate 153 is a binding site for Mg(2+). FMN is bound by residues lysine 184, threonine 214, 258 to 259, and 280 to 281; these read GG and AG.

The protein belongs to the IPP isomerase type 2 family. Homooctamer. Dimer of tetramers. FMN serves as cofactor. It depends on NADPH as a cofactor. The cofactor is Mg(2+).

Its subcellular location is the cytoplasm. It catalyses the reaction isopentenyl diphosphate = dimethylallyl diphosphate. Its function is as follows. Involved in the biosynthesis of isoprenoids. Catalyzes the 1,3-allylic rearrangement of the homoallylic substrate isopentenyl (IPP) to its allylic isomer, dimethylallyl diphosphate (DMAPP). This is Isopentenyl-diphosphate delta-isomerase from Bacillus mycoides (strain KBAB4) (Bacillus weihenstephanensis).